The sequence spans 222 residues: Glutathione S-transferase A1 (222 aa).

M1 is modified (N-acetylmethionine). N-acetylalanine; in Glutathione S-transferase A1, N-terminally processed is present on A2. Residues 3–83 form the GST N-terminal domain; that stretch reads GKPTLHYFNG…YIATKYNLYG (81 aa). K4 bears the N6-succinyllysine mark. Glutathione-binding positions include Y9, K45, 54–55, and 67–68; these read QV and QT. One can recognise a GST C-terminal domain in the interval 85-208; sequence DMKERALIDM…QPGSQRKPPT (124 aa).

It belongs to the GST superfamily. Alpha family. As to quaternary structure, homodimer or heterodimer of GSTA1 and GSTA2. As to expression, expressed in corpus luteum, adrenal gland, testis, liver, lung, thyroid and kidney.

It localises to the cytoplasm. It carries out the reaction RX + glutathione = an S-substituted glutathione + a halide anion + H(+). It catalyses the reaction prostaglandin A2 + glutathione = prostaglandin A2-S-(R)-glutathione. The enzyme catalyses prostaglandin J2 + glutathione = prostaglandin J2-S-(R)-glutathione. The catalysed reaction is (13S)-hydroperoxy-(9Z,11E)-octadecadienoate + 2 glutathione = (13S)-hydroxy-(9Z,11E)-octadecadienoate + glutathione disulfide + H2O. It carries out the reaction androst-5-ene-3,17-dione = androst-4-ene-3,17-dione. Its function is as follows. Glutathione S-transferase that catalyzes the nucleophilic attack of the sulfur atom of glutathione on the electrophilic groups of a wide range of exogenous and endogenous compounds. Involved in the formation of glutathione conjugates of both prostaglandin A2 (PGA2) and prostaglandin J2 (PGJ2). It also catalyzes the isomerization of D5-androstene-3,17-dione (AD) into D4-androstene-3,17-dione and may therefore play an important role in hormone biosynthesis. Through its glutathione-dependent peroxidase activity toward the fatty acid hydroperoxide (13S)-hydroperoxy-(9Z,11E)-octadecadienoate/13-HPODE it is also involved in the metabolism of oxidized linoleic acid. In Bos taurus (Bovine), this protein is Glutathione S-transferase A1 (GSTA1).